A 126-amino-acid chain; its full sequence is UPF0231 protein VC0395_A0134/VC395_0622 (126 aa).

The protein belongs to the UPF0231 family.

This chain is UPF0231 protein VC0395_A0134/VC395_0622, found in Vibrio cholerae serotype O1 (strain ATCC 39541 / Classical Ogawa 395 / O395).